We begin with the raw amino-acid sequence, 396 residues long: Argininosuccinate synthase (396 aa).

ATP is bound by residues 10–18 (AYSGGLDTS) and Ala37. Positions 88 and 93 each coordinate L-citrulline. Residue Gly118 coordinates ATP. Residues Thr120, Asn124, and Asp125 each coordinate L-aspartate. Asn124 contacts L-citrulline. Positions 128, 176, 185, 261, and 273 each coordinate L-citrulline.

Belongs to the argininosuccinate synthase family. Type 1 subfamily. Homotetramer.

It is found in the cytoplasm. The catalysed reaction is L-citrulline + L-aspartate + ATP = 2-(N(omega)-L-arginino)succinate + AMP + diphosphate + H(+). It participates in amino-acid biosynthesis; L-arginine biosynthesis; L-arginine from L-ornithine and carbamoyl phosphate: step 2/3. This is Argininosuccinate synthase from Nitratidesulfovibrio vulgaris (strain DP4) (Desulfovibrio vulgaris).